A 609-amino-acid chain; its full sequence is Replication protein A 70 kDa DNA-binding subunit (609 aa).

The tract at residues 112–164 is disordered; the sequence is IGNPHPYNDGQGPPQPAAPAPASAPPPSKPQNISAPPPPSMNRGASKLFGGGS. The segment covering 124–151 has biased composition (pro residues); that stretch reads PPQPAAPAPASAPPPSKPQNISAPPPPS. The OB DNA-binding region spans 189 to 273; the sequence is WTVRARVTNK…VKNDYEMTFN (85 aa). A C4-type zinc finger spans residues 472-494; it reads CPSQDCNKKVIDQQNGLFRCEKC.

It belongs to the replication factor A protein 1 family. Component of the heterotrimeric canonical replication protein A complex (RPA). Interacts with rpain-a.

The protein resides in the nucleus. The protein localises to the PML body. As part of the heterotrimeric replication protein A complex (RPA/RP-A), binds and stabilizes single-stranded DNA intermediates, that form during DNA replication or upon DNA stress. It prevents their reannealing and in parallel, recruits and activates different proteins and complexes involved in DNA metabolism. Thereby, it plays an essential role both in DNA replication and the cellular response to DNA damage. This chain is Replication protein A 70 kDa DNA-binding subunit (rpa1), found in Xenopus tropicalis (Western clawed frog).